Here is a 217-residue protein sequence, read N- to C-terminus: Growth hormone variant (217 aa).

Positions 1–26 are cleaved as a signal peptide; sequence MAAGSRTSLLLAFGLLCLSWLQEGSA. Intrachain disulfides connect C79–C191 and C208–C215. Residue S132 is modified to Phosphoserine. A glycan (N-linked (GlcNAc...) asparagine) is linked at N166. A Phosphoserine modification is found at S176.

The protein belongs to the somatotropin/prolactin family. As to quaternary structure, monomer, dimer, trimer, tetramer and pentamer, disulfide-linked or non-covalently associated, in homomeric and heteromeric combinations. Can also form a complex either with GHBP or with the alpha2-macroglobulin complex. Expressed in the placenta.

It localises to the secreted. Plays an important role in growth control. Its major role in stimulating body growth is to stimulate the liver and other tissues to secrete IGF1. It stimulates both the differentiation and proliferation of myoblasts. It also stimulates amino acid uptake and protein synthesis in muscle and other tissues. The chain is Growth hormone variant (GH2) from Homo sapiens (Human).